Consider the following 127-residue polypeptide: Large ribosomal subunit protein bL20 (127 aa).

It belongs to the bacterial ribosomal protein bL20 family.

In terms of biological role, binds directly to 23S ribosomal RNA and is necessary for the in vitro assembly process of the 50S ribosomal subunit. It is not involved in the protein synthesizing functions of that subunit. The polypeptide is Large ribosomal subunit protein bL20 (Streptomyces avermitilis (strain ATCC 31267 / DSM 46492 / JCM 5070 / NBRC 14893 / NCIMB 12804 / NRRL 8165 / MA-4680)).